Reading from the N-terminus, the 322-residue chain is Ferredoxin--NADP reductase (322 aa).

Positions 14, 33, 41, 46, 86, 120, 278, and 319 each coordinate FAD.

Belongs to the ferredoxin--NADP reductase type 2 family. As to quaternary structure, homodimer. The cofactor is FAD.

It catalyses the reaction 2 reduced [2Fe-2S]-[ferredoxin] + NADP(+) + H(+) = 2 oxidized [2Fe-2S]-[ferredoxin] + NADPH. This Salinispora arenicola (strain CNS-205) protein is Ferredoxin--NADP reductase.